We begin with the raw amino-acid sequence, 901 residues long: Protein translocase subunit SecA (901 aa).

ATP contacts are provided by residues Gln-87, 105 to 109, and Asp-512; that span reads GEGKT. Positions 885, 887, 896, and 897 each coordinate Zn(2+).

It belongs to the SecA family. As to quaternary structure, monomer and homodimer. Part of the essential Sec protein translocation apparatus which comprises SecA, SecYEG and auxiliary proteins SecDF-YajC and YidC. The cofactor is Zn(2+).

Its subcellular location is the cell inner membrane. It localises to the cytoplasm. It carries out the reaction ATP + H2O + cellular proteinSide 1 = ADP + phosphate + cellular proteinSide 2.. Part of the Sec protein translocase complex. Interacts with the SecYEG preprotein conducting channel. Has a central role in coupling the hydrolysis of ATP to the transfer of proteins into and across the cell membrane, serving both as a receptor for the preprotein-SecB complex and as an ATP-driven molecular motor driving the stepwise translocation of polypeptide chains across the membrane. The polypeptide is Protein translocase subunit SecA (Salmonella typhi).